The following is a 298-amino-acid chain: 4-hydroxy-tetrahydrodipicolinate synthase (298 aa).

Threonine 48 lines the pyruvate pocket. Catalysis depends on tyrosine 137, which acts as the Proton donor/acceptor. Lysine 166 functions as the Schiff-base intermediate with substrate in the catalytic mechanism. Isoleucine 207 provides a ligand contact to pyruvate.

The protein belongs to the DapA family. In terms of assembly, homotetramer; dimer of dimers.

Its subcellular location is the cytoplasm. It catalyses the reaction L-aspartate 4-semialdehyde + pyruvate = (2S,4S)-4-hydroxy-2,3,4,5-tetrahydrodipicolinate + H2O + H(+). Its pathway is amino-acid biosynthesis; L-lysine biosynthesis via DAP pathway; (S)-tetrahydrodipicolinate from L-aspartate: step 3/4. Functionally, catalyzes the condensation of (S)-aspartate-beta-semialdehyde [(S)-ASA] and pyruvate to 4-hydroxy-tetrahydrodipicolinate (HTPA). In Campylobacter lari (strain RM2100 / D67 / ATCC BAA-1060), this protein is 4-hydroxy-tetrahydrodipicolinate synthase.